We begin with the raw amino-acid sequence, 345 residues long: Nuclear distribution protein nudE-like 1-A (345 aa).

A coiled-coil region spans residues 19–190; that stretch reads WRELSKRLKQ…LAVRERQTDG (172 aa). A compositionally biased stretch (basic and acidic residues) spans 182 to 192; that stretch reads AVRERQTDGTR. Disordered stretches follow at residues 182–206 and 326–345; these read AVRERQTDGTRKSAPSSPTLDCDKT and PPGVLGSRPPSPPGMLPLSV. Residues 334-345 show a composition bias toward pro residues; the sequence is PPSPPGMLPLSV.

This sequence belongs to the nudE family. In terms of processing, phosphorylated in mitosis.

It localises to the cytoplasm. Its subcellular location is the cytoskeleton. The protein localises to the microtubule organizing center. It is found in the centrosome. The protein resides in the spindle. Its function is as follows. Required for organization of the cellular microtubule array and microtubule anchoring at the centrosome. Positively regulates the activity of the minus-end directed microtubule motor protein dynein. May enhance dynein-mediated microtubule sliding by targeting dynein to the microtubule plus end. Positively regulates lysosome peripheral distribution and ruffled border formation in osteoclasts. This chain is Nuclear distribution protein nudE-like 1-A (ndel1-a), found in Xenopus laevis (African clawed frog).